The primary structure comprises 95 residues: Aspartyl/glutamyl-tRNA(Asn/Gln) amidotransferase subunit C (95 aa).

Belongs to the GatC family. In terms of assembly, heterotrimer of A, B and C subunits.

The enzyme catalyses L-glutamyl-tRNA(Gln) + L-glutamine + ATP + H2O = L-glutaminyl-tRNA(Gln) + L-glutamate + ADP + phosphate + H(+). The catalysed reaction is L-aspartyl-tRNA(Asn) + L-glutamine + ATP + H2O = L-asparaginyl-tRNA(Asn) + L-glutamate + ADP + phosphate + 2 H(+). In terms of biological role, allows the formation of correctly charged Asn-tRNA(Asn) or Gln-tRNA(Gln) through the transamidation of misacylated Asp-tRNA(Asn) or Glu-tRNA(Gln) in organisms which lack either or both of asparaginyl-tRNA or glutaminyl-tRNA synthetases. The reaction takes place in the presence of glutamine and ATP through an activated phospho-Asp-tRNA(Asn) or phospho-Glu-tRNA(Gln). The polypeptide is Aspartyl/glutamyl-tRNA(Asn/Gln) amidotransferase subunit C (Rhodopseudomonas palustris (strain ATCC BAA-98 / CGA009)).